Here is a 111-residue protein sequence, read N- to C-terminus: Large ribosomal subunit protein uL22 (111 aa).

This sequence belongs to the universal ribosomal protein uL22 family. Part of the 50S ribosomal subunit.

This protein binds specifically to 23S rRNA; its binding is stimulated by other ribosomal proteins, e.g. L4, L17, and L20. It is important during the early stages of 50S assembly. It makes multiple contacts with different domains of the 23S rRNA in the assembled 50S subunit and ribosome. Its function is as follows. The globular domain of the protein is located near the polypeptide exit tunnel on the outside of the subunit, while an extended beta-hairpin is found that lines the wall of the exit tunnel in the center of the 70S ribosome. The polypeptide is Large ribosomal subunit protein uL22 (Legionella pneumophila (strain Lens)).